The primary structure comprises 436 residues: GTPase Der (436 aa).

EngA-type G domains are found at residues 4–167 (PVVA…PKGG) and 176–351 (IKFC…DNHA). Residues 10 to 17 (GRPNVGKS), 57 to 61 (DTGGI), 119 to 122 (NKID), 182 to 189 (GRPNVGKS), 229 to 233 (DTAGM), and 294 to 297 (NKWD) each bind GTP. The 85-residue stretch at 352 to 436 (MRVQTNVLNE…PIKIIARPRK (85 aa)) folds into the KH-like domain.

Belongs to the TRAFAC class TrmE-Era-EngA-EngB-Septin-like GTPase superfamily. EngA (Der) GTPase family. Associates with the 50S ribosomal subunit.

Functionally, GTPase that plays an essential role in the late steps of ribosome biogenesis. The sequence is that of GTPase Der from Geobacillus kaustophilus (strain HTA426).